We begin with the raw amino-acid sequence, 290 residues long: Xyloglucan endotransglycosylase/hydrolase protein 8 (290 aa).

Positions 1–25 (MAKHLALSVAAAVAVSWLAASSAAA) are cleaved as a signal peptide. In terms of domain architecture, GH16 spans 26–218 (AGFYEKFDVV…WSGAPFVVSY (193 aa)). The active-site Nucleophile is the E106. E110 (proton donor) is an active-site residue. E110 is a binding site for xyloglucan. N114 carries N-linked (GlcNAc...) asparagine glycosylation. Xyloglucan contacts are provided by residues 123 to 125 (NTN), 133 to 135 (KKE), and 197 to 198 (YW). 2 disulfides stabilise this stretch: C226-C240 and C273-C287. R278 contacts xyloglucan.

It belongs to the glycosyl hydrolase 16 family. XTH group 2 subfamily. Contains at least one intrachain disulfide bond essential for its enzymatic activity. As to expression, transcript strongly detected in leaf sheaths. Weakly or not expressed in leaf blades, roots and calli. Accumulation of transcript detected in shoot apex meristem, vascular tissues, young leaves, vascular bundles of leaf sheaths, and peripheral cylinder of the vascular bundles and fibers in the nodal region.

It is found in the secreted. It localises to the cell wall. The protein localises to the extracellular space. Its subcellular location is the apoplast. The enzyme catalyses breaks a beta-(1-&gt;4) bond in the backbone of a xyloglucan and transfers the xyloglucanyl segment on to O-4 of the non-reducing terminal glucose residue of an acceptor, which can be a xyloglucan or an oligosaccharide of xyloglucan.. In terms of biological role, catalyzes xyloglucan endohydrolysis (XEH) and/or endotransglycosylation (XET). Cleaves and religates xyloglucan polymers, an essential constituent of the primary cell wall, and thereby participates in cell wall construction of growing tissues. May promote elongation of three internodes (II, III and IV) and may be involved in cell elongation processes. The chain is Xyloglucan endotransglycosylase/hydrolase protein 8 (XTH8) from Oryza sativa subsp. japonica (Rice).